The chain runs to 565 residues: NAD-dependent malic enzyme (565 aa).

Tyr104 acts as the Proton donor in catalysis. Residue Arg157 participates in NAD(+) binding. The active-site Proton acceptor is Lys175. The a divalent metal cation site is built by Glu246, Asp247, and Asp270. Residues Asp270 and Asn418 each coordinate NAD(+).

The protein belongs to the malic enzymes family. Homotetramer. It depends on Mg(2+) as a cofactor. The cofactor is Mn(2+).

The catalysed reaction is (S)-malate + NAD(+) = pyruvate + CO2 + NADH. It carries out the reaction oxaloacetate + H(+) = pyruvate + CO2. The chain is NAD-dependent malic enzyme from Yersinia pseudotuberculosis serotype O:1b (strain IP 31758).